We begin with the raw amino-acid sequence, 101 residues long: Large ribosomal subunit protein uL24 (101 aa).

This sequence belongs to the universal ribosomal protein uL24 family. As to quaternary structure, part of the 50S ribosomal subunit.

Functionally, one of two assembly initiator proteins, it binds directly to the 5'-end of the 23S rRNA, where it nucleates assembly of the 50S subunit. In terms of biological role, one of the proteins that surrounds the polypeptide exit tunnel on the outside of the subunit. The chain is Large ribosomal subunit protein uL24 from Borreliella burgdorferi (strain ATCC 35210 / DSM 4680 / CIP 102532 / B31) (Borrelia burgdorferi).